Here is a 354-residue protein sequence, read N- to C-terminus: Guanine nucleotide-binding protein G(i) subunit alpha (354 aa).

G2 carries N-myristoyl glycine lipidation. C3 is lipidated: S-palmitoyl cysteine. The G-alpha domain maps to 32–354 (REVKLLLLGA…KNNLKDCGLF (323 aa)). Residues 35–48 (KLLLLGAGESGKST) are G1 motif. Residues 40–47 (GAGESGKS), 175–181 (LRTRVKT), 200–204 (DVGGQ), 269–272 (NKKD), and A326 contribute to the GTP site. Mg(2+) contacts are provided by S47 and T181. The tract at residues 173–181 (DVLRTRVKT) is G2 motif. Residues 196-205 (FKMFDVGGQR) form a G3 motif region. Positions 265-272 (ILFLNKKD) are G4 motif. The tract at residues 324–329 (TCATDT) is G5 motif.

This sequence belongs to the G-alpha family. G(i/o/t/z) subfamily. In terms of assembly, g proteins are composed of 3 units; alpha, beta and gamma. The alpha chain contains the guanine nucleotide binding site.

Its function is as follows. Guanine nucleotide-binding proteins (G proteins) are involved as modulators or transducers in various transmembrane signaling systems. This G protein is involved in 1-methyladenine-induced oocyte maturation. The protein is Guanine nucleotide-binding protein G(i) subunit alpha of Patiria pectinifera (Starfish).